Consider the following 250-residue polypeptide: Adapter protein MecA (250 aa).

Belongs to the MecA family. As to quaternary structure, homodimer.

Its function is as follows. Enables the recognition and targeting of unfolded and aggregated proteins to the ClpC protease or to other proteins involved in proteolysis. In Streptococcus sanguinis (strain SK36), this protein is Adapter protein MecA.